Reading from the N-terminus, the 657-residue chain is Methionine--tRNA ligase (657 aa).

A 'HIGH' region motif is present at residues 13-23 (YYPSGNLHIGH). The 'KMSKS' region signature appears at 308–312 (KMSKS). Lysine 311 serves as a coordination point for ATP. In terms of domain architecture, tRNA-binding spans 557–657 (DFDKVEIKAA…SAIPNGAVIK (101 aa)).

The protein belongs to the class-I aminoacyl-tRNA synthetase family. MetG type 2B subfamily. In terms of assembly, homodimer.

It localises to the cytoplasm. It carries out the reaction tRNA(Met) + L-methionine + ATP = L-methionyl-tRNA(Met) + AMP + diphosphate. In terms of biological role, is required not only for elongation of protein synthesis but also for the initiation of all mRNA translation through initiator tRNA(fMet) aminoacylation. The protein is Methionine--tRNA ligase of Staphylococcus aureus (strain MRSA252).